We begin with the raw amino-acid sequence, 137 residues long: Small ribosomal subunit protein uS12 (137 aa).

At Asp89 the chain carries 3-methylthioaspartic acid. The disordered stretch occupies residues 105–137; that stretch reads AGVAGRTQRRSKYGAKRPKAGQAAAPAKGKGKK. Residues 111 to 123 are compositionally biased toward basic residues; that stretch reads TQRRSKYGAKRPK. Positions 124–137 are enriched in low complexity; that stretch reads AGQAAAPAKGKGKK.

This sequence belongs to the universal ribosomal protein uS12 family. In terms of assembly, part of the 30S ribosomal subunit. Contacts proteins S8 and S17. May interact with IF1 in the 30S initiation complex.

In terms of biological role, with S4 and S5 plays an important role in translational accuracy. Its function is as follows. Interacts with and stabilizes bases of the 16S rRNA that are involved in tRNA selection in the A site and with the mRNA backbone. Located at the interface of the 30S and 50S subunits, it traverses the body of the 30S subunit contacting proteins on the other side and probably holding the rRNA structure together. The combined cluster of proteins S8, S12 and S17 appears to hold together the shoulder and platform of the 30S subunit. The sequence is that of Small ribosomal subunit protein uS12 from Phocaeicola vulgatus (strain ATCC 8482 / DSM 1447 / JCM 5826 / CCUG 4940 / NBRC 14291 / NCTC 11154) (Bacteroides vulgatus).